A 278-amino-acid polypeptide reads, in one-letter code: Diaminopimelate epimerase (278 aa).

Asn11 and Asn75 together coordinate substrate. The active-site Proton donor is Cys84. Residues 85–86, Asn160, Asn195, and 213–214 contribute to the substrate site; these read GN and ER. The Proton acceptor role is filled by Cys222. A substrate-binding site is contributed by 223–224; it reads GT.

Belongs to the diaminopimelate epimerase family. In terms of assembly, homodimer.

It localises to the cytoplasm. The catalysed reaction is (2S,6S)-2,6-diaminopimelate = meso-2,6-diaminopimelate. The protein operates within amino-acid biosynthesis; L-lysine biosynthesis via DAP pathway; DL-2,6-diaminopimelate from LL-2,6-diaminopimelate: step 1/1. Catalyzes the stereoinversion of LL-2,6-diaminopimelate (L,L-DAP) to meso-diaminopimelate (meso-DAP), a precursor of L-lysine and an essential component of the bacterial peptidoglycan. This Corynebacterium aurimucosum (strain ATCC 700975 / DSM 44827 / CIP 107346 / CN-1) (Corynebacterium nigricans) protein is Diaminopimelate epimerase.